The primary structure comprises 320 residues: Ferrochelatase (320 aa).

Residues His194 and Glu275 each coordinate Fe cation.

The protein belongs to the ferrochelatase family. As to quaternary structure, monomer.

The protein localises to the cytoplasm. The enzyme catalyses heme b + 2 H(+) = protoporphyrin IX + Fe(2+). Its pathway is porphyrin-containing compound metabolism; protoheme biosynthesis; protoheme from protoporphyrin-IX: step 1/1. Its function is as follows. Catalyzes the ferrous insertion into protoporphyrin IX. In Salmonella schwarzengrund (strain CVM19633), this protein is Ferrochelatase.